A 209-amino-acid chain; its full sequence is Ribosomal RNA small subunit methyltransferase G (209 aa).

Residues Gly74, Phe79, and Arg139 each contribute to the S-adenosyl-L-methionine site.

It belongs to the methyltransferase superfamily. RNA methyltransferase RsmG family.

It localises to the cytoplasm. It catalyses the reaction guanosine(527) in 16S rRNA + S-adenosyl-L-methionine = N(7)-methylguanosine(527) in 16S rRNA + S-adenosyl-L-homocysteine. Its function is as follows. Specifically methylates the N7 position of guanine in position 527 of 16S rRNA. This is Ribosomal RNA small subunit methyltransferase G from Halorhodospira halophila (strain DSM 244 / SL1) (Ectothiorhodospira halophila (strain DSM 244 / SL1)).